A 702-amino-acid polypeptide reads, in one-letter code: Elongation factor G (702 aa).

Residues 8-290 enclose the tr-type G domain; that stretch reads ERYRNIGISA…AVIDYLPSPV (283 aa). GTP contacts are provided by residues 17–24, 88–92, and 142–145; these read AHIDAGKT, DTPGH, and NKMD.

This sequence belongs to the TRAFAC class translation factor GTPase superfamily. Classic translation factor GTPase family. EF-G/EF-2 subfamily.

The protein localises to the cytoplasm. Functionally, catalyzes the GTP-dependent ribosomal translocation step during translation elongation. During this step, the ribosome changes from the pre-translocational (PRE) to the post-translocational (POST) state as the newly formed A-site-bound peptidyl-tRNA and P-site-bound deacylated tRNA move to the P and E sites, respectively. Catalyzes the coordinated movement of the two tRNA molecules, the mRNA and conformational changes in the ribosome. This is Elongation factor G from Acidovorax ebreus (strain TPSY) (Diaphorobacter sp. (strain TPSY)).